A 122-amino-acid polypeptide reads, in one-letter code: Anti-sigma-F factor antagonist RsfB (122 aa).

Residues 7–115 (ITVTVADHNG…STLHDALTGV (109 aa)) enclose the STAS domain. Serine 61 is subject to Phosphoserine.

The protein belongs to the anti-sigma-factor antagonist family. Interacts with anti-sigma-F factor RsbW (UsfX). Its phosphorylation may prevent this interaction. Putative phosphorylation on Ser-61 may prevent interaction with RsbW.

Positive regulator of sigma-F (SigF) activity. Binds to anti-sigma-F factor RsbW (UsfX) preventing its binding to SigF, thus activating transcription. This Mycobacterium tuberculosis (strain CDC 1551 / Oshkosh) protein is Anti-sigma-F factor antagonist RsfB (rsfB).